A 288-amino-acid chain; its full sequence is Store-operated calcium entry regulator STIMATE (288 aa).

The Cytoplasmic segment spans residues 1-28 (MQGPGGNVSRGLPGGPASTVASGAGRCE). The next 3 helical transmembrane spans lie at 29 to 49 (SGAL…VVAF), 69 to 89 (IWFL…FANV), and 102 to 122 (LYLI…YVGV). The GXXXG motif motif lies at 149–153 (GAWVG). The next 2 helical transmembrane spans lie at 156 to 176 (ALYI…LLIL) and 194 to 214 (LAIV…WVVD). Residues 215 to 288 (NFLMRKGKTK…KKKHRFGLPV (74 aa)) lie on the Cytoplasmic side of the membrane. The interval 228–288 (EERGANQDSR…KKKHRFGLPV (61 aa)) is disordered. The interval 241 to 246 (KVRYRR) is required for localization in the endoplasmic reticulum. The segment covering 261 to 272 (ADDEMEESDAEE) has biased composition (acidic residues). Residues 277 to 288 (PVKKKHRFGLPV) show a composition bias toward basic residues.

It belongs to the STIMATE family. In terms of assembly, homooligomer. Interacts with STIM1.

It localises to the endoplasmic reticulum membrane. Its function is as follows. Acts as a regulator of store-operated Ca(2+) entry (SOCE) at junctional sites that connect the endoplasmic reticulum (ER) and plasma membrane (PM), called ER-plasma membrane (ER-PM) junction or cortical ER. SOCE is a Ca(2+) influx following depletion of intracellular Ca(2+) stores. Acts by interacting with STIM1, promoting STIM1 conformational switch. Involved in STIM1 relocalization to ER-PM junctions. Contributes to the maintenance and reorganization of store-dependent ER-PM junctions. This is Store-operated calcium entry regulator STIMATE from Rattus norvegicus (Rat).